The sequence spans 147 residues: Large ribosomal subunit protein uL11 (147 aa).

The protein belongs to the universal ribosomal protein uL11 family. Part of the ribosomal stalk of the 50S ribosomal subunit. Interacts with L10 and the large rRNA to form the base of the stalk. L10 forms an elongated spine to which L12 dimers bind in a sequential fashion forming a multimeric L10(L12)X complex. One or more lysine residues are methylated.

Forms part of the ribosomal stalk which helps the ribosome interact with GTP-bound translation factors. The sequence is that of Large ribosomal subunit protein uL11 from Bacteroides fragilis (strain ATCC 25285 / DSM 2151 / CCUG 4856 / JCM 11019 / LMG 10263 / NCTC 9343 / Onslow / VPI 2553 / EN-2).